Consider the following 765-residue polypeptide: LPS-assembly protein LptD (765 aa).

The signal sequence occupies residues M1 to A18.

This sequence belongs to the LptD family. As to quaternary structure, component of the lipopolysaccharide transport and assembly complex. Interacts with LptE and LptA.

Its subcellular location is the cell outer membrane. In terms of biological role, together with LptE, is involved in the assembly of lipopolysaccharide (LPS) at the surface of the outer membrane. This is LPS-assembly protein LptD from Shewanella oneidensis (strain ATCC 700550 / JCM 31522 / CIP 106686 / LMG 19005 / NCIMB 14063 / MR-1).